A 452-amino-acid chain; its full sequence is Pup--protein ligase (452 aa).

Glu9 lines the Mg(2+) pocket. Arg53 is an ATP binding site. Tyr55 is a Mg(2+) binding site. The Proton acceptor role is filled by Asp57. Glu63 is a binding site for Mg(2+). ATP is bound by residues Thr66 and Trp419.

Belongs to the Pup ligase/Pup deamidase family. Pup-conjugating enzyme subfamily.

It catalyses the reaction ATP + [prokaryotic ubiquitin-like protein]-L-glutamate + [protein]-L-lysine = ADP + phosphate + N(6)-([prokaryotic ubiquitin-like protein]-gamma-L-glutamyl)-[protein]-L-lysine.. It participates in protein degradation; proteasomal Pup-dependent pathway. Its pathway is protein modification; protein pupylation. Functionally, catalyzes the covalent attachment of the prokaryotic ubiquitin-like protein modifier Pup to the proteasomal substrate proteins, thereby targeting them for proteasomal degradation. This tagging system is termed pupylation. The ligation reaction involves the side-chain carboxylate of the C-terminal glutamate of Pup and the side-chain amino group of a substrate lysine. The sequence is that of Pup--protein ligase from Rhodococcus erythropolis (strain PR4 / NBRC 100887).